Here is an 808-residue protein sequence, read N- to C-terminus: Phenylalanine--tRNA ligase beta subunit (808 aa).

The region spanning Asn40–Leu155 is the tRNA-binding domain. The 76-residue stretch at Ile409–Thr484 folds into the B5 domain. Asp462, Asp468, Glu471, and Glu472 together coordinate Mg(2+). Residues Pro714–Arg807 form the FDX-ACB domain.

Belongs to the phenylalanyl-tRNA synthetase beta subunit family. Type 1 subfamily. As to quaternary structure, tetramer of two alpha and two beta subunits. Mg(2+) is required as a cofactor.

Its subcellular location is the cytoplasm. It carries out the reaction tRNA(Phe) + L-phenylalanine + ATP = L-phenylalanyl-tRNA(Phe) + AMP + diphosphate + H(+). This Halalkalibacterium halodurans (strain ATCC BAA-125 / DSM 18197 / FERM 7344 / JCM 9153 / C-125) (Bacillus halodurans) protein is Phenylalanine--tRNA ligase beta subunit (pheT).